The following is a 625-amino-acid chain: Putative surface protein bspA-like (625 aa).

Topologically, residues 1-548 (MMTPGKSSKT…KAIKGGEIAG (548 aa)) are extracellular. Asn-15 is a glycosylation site (N-linked (GlcNAc...) asparagine). 13 LRR repeats span residues 38–60 (CSSF…AFTG), 61–83 (CSSL…AFSE), 85–106 (SSIT…AFSG), 107–129 (CSKL…AFRG), 153–175 (CSSL…AFYG), 176–198 (CSSL…AFQE), 200–221 (SKLT…AFKR), 222–245 (CSSL…FYEC), 247–267 (KLTS…AFSK), 271–293 (LTSI…VFLN), 325–347 (IPKS…TLTH), 348–368 (FTNL…PESF), and 369–392 (IEGD…AFKD). An N-linked (GlcNAc...) asparagine glycan is attached at Asn-227. The tract at residues 439 to 538 (KQSEENPNQP…TDDPSKSKEN (100 aa)) is disordered. Positions 443–526 (ENPNQPGENP…QPGENPSQPG (84 aa)) are enriched in low complexity. Residues 549–571 (IIIGSLIGICLVVAICFGVYYYF) traverse the membrane as a helical segment. Residues 572–625 (MRIKPKNKNDDNEGNQEDTIANGTNEVTNENVLATFDEQPNNESDSNGLDSAEV) are Cytoplasmic-facing. Residues 577–625 (KNKNDDNEGNQEDTIANGTNEVTNENVLATFDEQPNNESDSNGLDSAEV) form a disordered region. Positions 588–625 (EDTIANGTNEVTNENVLATFDEQPNNESDSNGLDSAEV) are enriched in polar residues.

It localises to the cell membrane. Functionally, may bind host tissue. The protein is Putative surface protein bspA-like (BSPAL1) of Trichomonas vaginalis.